Consider the following 338-residue polypeptide: MATQHPIGKKTACVVGGTGFVASLLVKLLLQKGYAVNTTVRDPDNQKKVSHLLELQELGDLKIFRADLTDELSFEAPIAGCDFVFHVATPVHFASEDPENDMIKPAIQGVVNVMKACTRAKSVKRVILTSSAAAVTINQLDGTGLVVDEKNWTDIEFLTSAKPPTWGYPASKTLAEKAAWKFAEENNIDLITVIPTLMAGSSLTSDVPSSIGLAMSLITGNEFLINGMKGMQMLSGSVSIAHVEDVCQAHIFVAEKESASGRYICCAANTSVPELAKFLSKRYPQYKVPTDFGDFPPKSKLIISSEKLVKEGFSFKYGIEEIYDESVEYFKAKGLLQN.

Residues 18 to 21 (TGFV), Lys48, 87 to 90 (VATP), and Tyr168 contribute to the NADP(+) site.

The protein belongs to the NAD(P)-dependent epimerase/dehydratase family. Dihydroflavonol-4-reductase subfamily. Expressed in leaves and grape berries.

The catalysed reaction is a (2S,3R)-flavan-3-ol + 2 NADP(+) = an anthocyanidin with a 3-hydroxy group + 2 NADPH + 2 H(+). It carries out the reaction a (2S,3S)-flavan-3-ol + 2 NADP(+) = an anthocyanidin with a 3-hydroxy group + 2 NADPH + 2 H(+). It functions in the pathway secondary metabolite biosynthesis; flavonoid biosynthesis. Produces the terminal flavan-3-ol monomers required for the formation of proanthocyanidins or condensed tannins in leaves and flowers, as well as in the skin and seeds of developing berries. Behaves as a reductase and as a C-3 epimerase. Catalyzes the double reduction of anthocyanidins, producing a mixture of (2S,3S)- and (2S,3R)-flavan-3-ols. The enzyme catalyzes sequential hydride transfers to C-2 and C-4, respectively and epimerization at C-3 is achieved by tautomerization that occurs between the two hydride transfers. Converts cyanidin, pelargonidin and delphinidin into catechin and epicatechin, afzelechin and epiafzelechin, and gallocatechin and epigallocatechin respectively. In Vitis vinifera (Grape), this protein is Anthocyanidin reductase ((2S)-flavan-3-ol-forming).